We begin with the raw amino-acid sequence, 215 residues long: Adenylate kinase (215 aa).

Gly10–Thr15 is a binding site for ATP. Residues Ser30–Val59 form an NMP region. Residues Thr31, Arg36, Gly57–Val59, Gly85–Arg88, and Gln92 contribute to the AMP site. An LID region spans residues Gly122–Asp159. Residues Arg123 and Ile132–Tyr133 contribute to the ATP site. AMP is bound by residues Arg156 and Arg167. Gly201 is an ATP binding site.

The protein belongs to the adenylate kinase family. As to quaternary structure, monomer.

It is found in the cytoplasm. The enzyme catalyses AMP + ATP = 2 ADP. The protein operates within purine metabolism; AMP biosynthesis via salvage pathway; AMP from ADP: step 1/1. Its function is as follows. Catalyzes the reversible transfer of the terminal phosphate group between ATP and AMP. Plays an important role in cellular energy homeostasis and in adenine nucleotide metabolism. The polypeptide is Adenylate kinase (Pseudomonas syringae pv. syringae (strain B728a)).